The primary structure comprises 224 residues: Mannose-specific lectin 3 (224 aa).

2 consecutive Bulb-type lectin domains span residues 2-111 and 117-222; these read NNVL…PAAA and RNVL…VWST. Intrachain disulfides connect Cys30/Cys52 and Cys145/Cys170.

Heterotetramer of 2 domain 1 and 2 domain 2 chains arranged as a dimer of domain 1/domain 2 heterodimers.

Its function is as follows. Mannose-specific lectin. Has weak agglutinating activity towards trypsin-treated erythrocytes from rabbit but not from human. The chain is Mannose-specific lectin 3 from Crocus vernus (Dutch crocus).